The following is a 997-amino-acid chain: Protein argonaute 5 (997 aa).

2 stretches are compositionally biased toward gly residues: residues 1 to 16 (MSNR…SRGR) and 43 to 59 (GGRG…GNVG). The tract at residues 1–144 (MSNRGGGGHG…TSLPPASSKA (144 aa)) is disordered. A compositionally biased stretch (low complexity) spans 93–106 (SVASSSKTVSVASS). Positions 116 to 129 (VSETMSNLQITSTE) are enriched in polar residues. The 112-residue stretch at 360–471 (VVTDFISKFL…LPMELCQIDE (112 aa)) folds into the PAZ domain. The Piwi domain occupies 638–958 (LLIVILPDVT…AAFRARYYME (321 aa)). A divalent metal cation-binding residues include D721 and D807. Interaction with guide RNA regions lie at residues 847-848 (KR), 893-901 (HAGIQGTSR), and 930-952 (YARC…AAFR). Residue H947 coordinates a divalent metal cation.

This sequence belongs to the argonaute family. Ago subfamily. The cofactor is Mg(2+). Mn(2+) serves as cofactor.

In terms of biological role, involved in RNA-mediated post-transcriptional gene silencing (PTGS). Main component of the RNA-induced silencing complex (RISC) that binds to a short guide RNA such as a microRNA (miRNA) or small interfering RNA (siRNA). RISC uses the mature miRNA or siRNA as a guide for slicer-directed cleavage of homologous mRNAs to repress gene expression. Associates with siRNAs of various sizes, from 21-24 nucleotide in length and preferentially recruits small RNAs with a 5' terminal cytosine. Probably involved in antiviral RNA silencing. Associates with siRNAs derived from cucumber mosaic virus (CMV). Targeted by the turnip yellows virus (TuYV) protein P0 (via F-box-like domain) for probable proteasome degradation and thereby inactivating AGO5 function in RNA silencing. The polypeptide is Protein argonaute 5 (AGO5) (Arabidopsis thaliana (Mouse-ear cress)).